The following is a 118-amino-acid chain: Small ribosomal subunit protein uS13 (118 aa).

Residues 92 to 118 (RRGLPVRGQRTKTNARTRKGPRKPIKK) form a disordered region.

It belongs to the universal ribosomal protein uS13 family. In terms of assembly, part of the 30S ribosomal subunit. Forms a loose heterodimer with protein S19. Forms two bridges to the 50S subunit in the 70S ribosome.

Its function is as follows. Located at the top of the head of the 30S subunit, it contacts several helices of the 16S rRNA. In the 70S ribosome it contacts the 23S rRNA (bridge B1a) and protein L5 of the 50S subunit (bridge B1b), connecting the 2 subunits; these bridges are implicated in subunit movement. Contacts the tRNAs in the A and P-sites. In Yersinia enterocolitica serotype O:8 / biotype 1B (strain NCTC 13174 / 8081), this protein is Small ribosomal subunit protein uS13.